Reading from the N-terminus, the 521-residue chain is GMP synthase [glutamine-hydrolyzing] (521 aa).

Positions 9-203 constitute a Glutamine amidotransferase type-1 domain; sequence KILILDFGSQ…VSDICQCKKN (195 aa). C86 functions as the Nucleophile in the catalytic mechanism. Active-site residues include H177 and E179. In terms of domain architecture, GMPS ATP-PPase spans 204-396; the sequence is WTTDNIITKL…LGLPTHMLNC (193 aa). An ATP-binding site is contributed by 231 to 237; it reads SGGVDSS.

Homodimer.

It carries out the reaction XMP + L-glutamine + ATP + H2O = GMP + L-glutamate + AMP + diphosphate + 2 H(+). Its pathway is purine metabolism; GMP biosynthesis; GMP from XMP (L-Gln route): step 1/1. In terms of biological role, catalyzes the synthesis of GMP from XMP. The chain is GMP synthase [glutamine-hydrolyzing] from Vesicomyosocius okutanii subsp. Calyptogena okutanii (strain HA).